The sequence spans 221 residues: uncharacterized protein (221 aa).

Helical transmembrane passes span 2 to 22 (FIAKSIVIGLLICVLFFFFFV), 34 to 54 (LLTLGLLNASLTALSDLLAQA), 97 to 117 (AYGLCLTPIQFRWFVALSNVI), 131 to 151 (ALDQFIFAPLGIVFFFLFMGI), and 177 to 197 (ILWPAVQLFNFTFVPLVLQVI).

Belongs to the peroxisomal membrane protein PXMP2/4 family.

The protein localises to the membrane. This is an uncharacterized protein from Schizosaccharomyces pombe (strain 972 / ATCC 24843) (Fission yeast).